The primary structure comprises 392 residues: Formate-dependent phosphoribosylglycinamide formyltransferase (392 aa).

N(1)-(5-phospho-beta-D-ribosyl)glycinamide-binding positions include 22–23 (EL) and Glu82. ATP contacts are provided by residues Arg114, Lys155, 160–165 (SSGKGQ), 195–198 (EGVV), and Glu203. One can recognise an ATP-grasp domain in the interval 119–308 (RLAAEELQLP…EFALHVRAFL (190 aa)). Positions 267 and 279 each coordinate Mg(2+). Residues Asp286, Lys355, and 362 to 363 (RR) each bind N(1)-(5-phospho-beta-D-ribosyl)glycinamide.

Belongs to the PurK/PurT family. Homodimer.

The enzyme catalyses N(1)-(5-phospho-beta-D-ribosyl)glycinamide + formate + ATP = N(2)-formyl-N(1)-(5-phospho-beta-D-ribosyl)glycinamide + ADP + phosphate + H(+). Its pathway is purine metabolism; IMP biosynthesis via de novo pathway; N(2)-formyl-N(1)-(5-phospho-D-ribosyl)glycinamide from N(1)-(5-phospho-D-ribosyl)glycinamide (formate route): step 1/1. Involved in the de novo purine biosynthesis. Catalyzes the transfer of formate to 5-phospho-ribosyl-glycinamide (GAR), producing 5-phospho-ribosyl-N-formylglycinamide (FGAR). Formate is provided by PurU via hydrolysis of 10-formyl-tetrahydrofolate. This chain is Formate-dependent phosphoribosylglycinamide formyltransferase, found in Klebsiella pneumoniae (strain 342).